A 202-amino-acid polypeptide reads, in one-letter code: MCRTLAAFPTSCLERAKEFKTRLGIFLHKSELGSDTGSVGKFEWGSKHSKEGKNFSEDVLGWKESFDLLLSSKNGVAAFHAFLKTEFSEENLEFWLACEEFKKLRSATKLGSRAHRIFEEFICSEAPKEVNIDHETRELTRTNLQAATAVCFDAAQWKVRALMEKDSYPRFLKSPAYRDLATQATAASASPSSSSPAEPLHT.

Residues C2 and C12 are each lipidated (S-palmitoyl cysteine). An RGS domain is found at S65–A181. Y168 is subject to Phosphotyrosine; by EGFR. Phosphotyrosine is present on Y177. The tract at residues Q183 to T202 is disordered.

As to quaternary structure, interacts with GNAI1 and GNAQ. Interacts with GNAI3, GNAI3 and GNAO1. Post-translationally, palmitoylated on Cys-2 and/or Cys-12. Phosphorylated. Phosphorylation at Tyr-168 by EGFR enhances GTPase accelerating (GAP) activity toward GNAI1.

It localises to the membrane. In terms of biological role, regulates G protein-coupled receptor signaling cascades. Inhibits signal transduction by increasing the GTPase activity of G protein alpha subunits, thereby driving them into their inactive GDP-bound form. Plays an important role in the phototransduction cascade by regulating the lifetime and effective concentration of activated transducin alpha. May regulate extra and intracellular mitogenic signals. This chain is Regulator of G-protein signaling 16 (RGS16), found in Bos taurus (Bovine).